The chain runs to 350 residues: Heat-inducible transcription repressor HrcA (350 aa).

Belongs to the HrcA family.

Its function is as follows. Negative regulator of class I heat shock genes (grpE-dnaK-dnaJ and groELS operons). Prevents heat-shock induction of these operons. This is Heat-inducible transcription repressor HrcA from Limosilactobacillus reuteri (strain DSM 20016) (Lactobacillus reuteri).